The primary structure comprises 474 residues: Carbohydrate sulfotransferase 3 (474 aa).

The Cytoplasmic portion of the chain corresponds to 1-19; that stretch reads MEKGLALPQDCRDLVHNLK. Residues 20–38 traverse the membrane as a helical; Signal-anchor for type II membrane protein segment; it reads IRGRYVLFLAFVVIVFIFI. Topologically, residues 39–474 are lumenal; that stretch reads EKENKIISRV…LEERGTFWVT (436 aa). N63, N74, and N96 each carry an N-linked (GlcNAc...) asparagine glycan. Residue 137 to 143 participates in 3'-phosphoadenylyl sulfate binding; sequence TRTGSSF. Residue N252 is glycosylated (N-linked (GlcNAc...) asparagine). A 3'-phosphoadenylyl sulfate-binding site is contributed by 297 to 305; it reads RDPRAVLAS. N415 and N459 each carry an N-linked (GlcNAc...) asparagine glycan.

It belongs to the sulfotransferase 1 family. Gal/GlcNAc/GalNAc subfamily. N-glycosylated.

It is found in the golgi apparatus membrane. It carries out the reaction chondroitin beta-D-glucuronate + n 3'-phosphoadenylyl sulfate = chondroitin 6'-sulfate + n adenosine 3',5'-bisphosphate + n H(+). The catalysed reaction is 3'-phosphoadenylyl sulfate + keratan = adenosine 3',5'-bisphosphate + keratan 6'-sulfate.. Functionally, sulfotransferase that utilizes 3'-phospho-5'-adenylyl sulfate (PAPS) as sulfonate donor to catalyze the transfer of sulfate to position 6 of the N-acetylgalactosamine (GalNAc) residue of chondroitin. Chondroitin sulfate constitutes the predominant proteoglycan present in cartilage and is distributed on the surfaces of many cells and extracellular matrices. Catalyzes with a lower efficiency the sulfation of Gal residues of keratan sulfate, another glycosaminoglycan. Can also catalyze the sulfation of the Gal residues in sialyl N-acetyllactosamine (sialyl LacNAc) oligosaccharides. May play a role in the maintenance of naive T-lymphocytes in the spleen. The protein is Carbohydrate sulfotransferase 3 (Chst3) of Rattus norvegicus (Rat).